A 976-amino-acid chain; its full sequence is Receptor-like protein 14 (976 aa).

The N-terminal stretch at 1-26 (MERKVFSGQNLIWVMLLLVQLRGYKC) is a signal peptide. Over 27–928 (CIEKERKALL…DDDDEAAIDM (902 aa)) the chain is Extracellular. N60, N75, N98, N112, N151, N185, and N200 each carry an N-linked (GlcNAc...) asparagine glycan. LRR repeat units lie at residues 105–127 (FEEL…LFDD), 137–160 (LRNL…FLNA), 162–185 (TSLT…ELKN), 186–209 (LTKL…FTHL), 210–233 (EKLK…ELKV), 234–258 (LTNL…VFCE), 260–283 (KNLR…LGNL), 284–306 (NKLR…SFNS), 308–331 (ESLE…PLAN), 333–358 (TKLK…WLPK), 359–381 (FQLT…LVYQ), 382–405 (TNLR…LLEN), 407–428 (PELK…PTIV), 429–452 (HKLQ…IGHV), 454–477 (PRLL…MGEM), 478–501 (NDIS…LLTG), and 503–528 (FSLI…RLTS). Residue N331 is glycosylated (N-linked (GlcNAc...) asparagine). The N-linked (GlcNAc...) asparagine glycan is linked to N416. 2 N-linked (GlcNAc...) asparagine glycosylation sites follow: N460 and N489. The LRR 18; degenerate repeat unit spans residues 530–549 (IVLRMHNNLFTGEIGVGLRT). LRR repeat units follow at residues 550 to 573 (LVNL…SIPP), 575 to 599 (SSHL…LLAI), 600 to 623 (HHLN…VVNS), 625 to 645 (YGIK…VTLL), 646 to 669 (ENAY…VNTG), 671 to 692 (MITL…LCDL), 693 to 715 (TSIR…CLNH), 782 to 805 (LDYM…ELGD), 806 to 829 (LSKL…NFSK), 831 to 854 (KDIE…LTNL), and 856 to 879 (SLAV…QFNT). N552 carries an N-linked (GlcNAc...) asparagine glycan. An N-linked (GlcNAc...) asparagine glycan is attached at N633. An N-linked (GlcNAc...) asparagine glycan is attached at N680. N-linked (GlcNAc...) asparagine glycans are attached at residues N813, N826, N853, N861, and N866. A disordered region spans residues 897 to 922 (DRSCEGKKNTKEADNGGEEEEEDDDD). Positions 898–910 (RSCEGKKNTKEAD) are enriched in basic and acidic residues. The span at 911-922 (NGGEEEEEDDDD) shows a compositional bias: acidic residues. The chain crosses the membrane as a helical span at residues 929–949 (VVLYWTTGSTYAIALIGILVL). Over 950–976 (MCFDCPWRRTWLCIVDAFIASGKSMFS) the chain is Cytoplasmic.

The protein belongs to the RLP family.

It localises to the cell membrane. The chain is Receptor-like protein 14 from Arabidopsis thaliana (Mouse-ear cress).